The sequence spans 1044 residues: Pre-mRNA-splicing factor ATP-dependent RNA helicase DHX16 (1044 aa).

Disordered stretches follow at residues Glu-101–Glu-210 and Leu-374–Ser-394. A phosphoserine mark is found at Ser-103, Ser-106, and Ser-107. Positions Gln-119–Lys-130 are enriched in basic residues. The span at Glu-134–Ala-143 shows a compositional bias: acidic residues. The residue at position 163 (Ser-163) is a Phosphoserine. The segment covering Arg-169 to Glu-210 has biased composition (basic and acidic residues). The Helicase ATP-binding domain occupies Leu-412–Pro-576. Gly-425 to Thr-432 provides a ligand contact to ATP. The short motif at Asp-523–His-526 is the DEAH box element. One can recognise a Helicase C-terminal domain in the interval Ser-601–Gly-774. The residue at position 715 (Thr-715) is a Phosphothreonine.

This sequence belongs to the DEAD box helicase family. DEAH subfamily. DDX16/PRP8 sub-subfamily. In terms of assembly, component of pre-catalytic spliceosome complexes. Component of the minor spliceosome, which splices U12-type introns. Interacts with GPKOW. Interacts with TRIM6. Interacts with RIGI.

The protein resides in the nucleus. Its subcellular location is the nucleoplasm. It is found in the cytoplasm. The enzyme catalyses ATP + H2O = ADP + phosphate + H(+). Required for pre-mRNA splicing as a component of the spliceosome. Contributes to pre-mRNA splicing after spliceosome formation and prior to the first transesterification reaction. As a component of the minor spliceosome, involved in the splicing of U12-type introns in pre-mRNAs. Also plays a role in innate antiviral response by acting as a pattern recognition receptor sensing splicing signals in viral RNA. Mechanistically, TRIM6 promotes the interaction between unanchored 'Lys-48'-polyubiquitin chains and DHX16, leading to DHX16 interaction with RIGI and ssRNA to amplify RIGI-dependent innate antiviral immune responses. The protein is Pre-mRNA-splicing factor ATP-dependent RNA helicase DHX16 (DHX16) of Pan troglodytes (Chimpanzee).